The sequence spans 1458 residues: Phospholipase B1, membrane-associated (1458 aa).

The N-terminal stretch at 1–21 (MGLRPGIFLLELLLLLGQGTP) is a signal peptide. Topologically, residues 22–1417 (QIHTSPRKST…QAEEAPEVLY (1396 aa)) are extracellular. 3 repeat units span residues 39-347 (ETLK…YRNS), 362-707 (VREG…YKNS), and 708-1054 (MQGH…PRNS). Positions 39–1402 (ETLKNSPFPC…SPYLYTLRNS (1364 aa)) are 4 X 308-326 AA approximate repeats. 2 N-linked (GlcNAc...) asparagine glycosylation sites follow: asparagine 173 and asparagine 240. Serine 400 is a catalytic residue. A glycan (N-linked (GlcNAc...) asparagine) is linked at asparagine 493. Aspartate 514 is an active-site residue. 2 N-linked (GlcNAc...) asparagine glycosylation sites follow: asparagine 529 and asparagine 590. Histidine 655 is a catalytic residue. N-linked (GlcNAc...) asparagine glycosylation is found at asparagine 690, asparagine 783, asparagine 797, asparagine 809, asparagine 1055, asparagine 1113, asparagine 1275, and asparagine 1378. The stretch at 1064-1402 (IENWGSDFLC…SPYLYTLRNS (339 aa)) is repeat 4. The interval 1403–1445 (RLLPDQAEEAPEVLYWAVPVAAGVGLVVGIIGTVVWRCRRGGR) is necessary for membrane localization. Residues 1418–1438 (WAVPVAAGVGLVVGIIGTVVW) traverse the membrane as a helical segment. The Cytoplasmic segment spans residues 1439-1458 (RCRRGGRREDPPMSLRTVAL).

This sequence belongs to the 'GDSL' lipolytic enzyme family. Phospholipase B1 subfamily. Post-translationally, undergoes proteolytic cleavage in the ileum. Expressed in the epidermis (at protein level).

Its subcellular location is the apical cell membrane. The enzyme catalyses a 1,2-diacyl-sn-glycero-3-phosphocholine + H2O = a 1-acyl-sn-glycero-3-phosphocholine + a fatty acid + H(+). It carries out the reaction a 1-O-alkyl-2-acyl-sn-glycero-3-phosphocholine + H2O = a 1-O-alkyl-sn-glycero-3-phosphocholine + a fatty acid + H(+). It catalyses the reaction a 1-acyl-sn-glycero-3-phosphocholine + H2O = sn-glycerol 3-phosphocholine + a fatty acid + H(+). The catalysed reaction is a triacylglycerol + H2O = a diacylglycerol + a fatty acid + H(+). The enzyme catalyses 1,2-dihexadecanoyl-sn-glycero-3-phosphocholine + H2O = 1-hexadecanoyl-sn-glycero-3-phosphocholine + hexadecanoate + H(+). It carries out the reaction 1-hexadecanoyl-2-(9Z-octadecenoyl)-sn-glycero-3-phosphocholine + H2O = 1-hexadecanoyl-sn-glycero-3-phosphocholine + (9Z)-octadecenoate + H(+). It catalyses the reaction 1,2-di-(9Z-octadecenoyl)-sn-glycero-3-phosphocholine + H2O = 1-(9Z-octadecenoyl)-sn-glycero-3-phosphocholine + (9Z)-octadecenoate + H(+). The catalysed reaction is 1-hexadecanoyl-2-(9Z,12Z-octadecadienoyl)-sn-glycero-3-phosphocholine + H2O = (9Z,12Z)-octadecadienoate + 1-hexadecanoyl-sn-glycero-3-phosphocholine + H(+). The enzyme catalyses 1-hexadecanoyl-2-(9Z,12Z-octadecadienoyl)-sn-glycero-3-phosphocholine + H2O = 2-(9Z,12Z-octadecadienoyl)-sn-glycero-3-phosphocholine + hexadecanoate + H(+). It carries out the reaction 1-hexadecanoyl-2-(9Z-octadecenoyl)-sn-glycero-3-phosphoethanolamine + H2O = 1-hexadecanoyl-sn-glycero-3-phosphoethanolamine + (9Z)-octadecenoate + H(+). It catalyses the reaction 1-hexadecanoyl-2-(9Z-octadecenoyl)-sn-glycero-3-phospho-(1'-sn-glycerol) + H2O = 1-hexadecanoyl-sn-glycero-3-phospho-(1'-sn-glycerol) + (9Z)-octadecenoate + H(+). The catalysed reaction is 1,2-dihexadecanoyl-sn-glycero-3-phosphocholine + 2 H2O = sn-glycerol 3-phosphocholine + 2 hexadecanoate + 2 H(+). The enzyme catalyses 1-O-hexadecyl-2-(9Z)-octadecenoyl-sn-glycero-3-phosphocholine + H2O = 1-O-hexadecyl-sn-glycero-3-phosphocholine + (9Z)-octadecenoate + H(+). It carries out the reaction 1-hexadecanoyl-sn-glycero-3-phosphocholine + H2O = sn-glycerol 3-phosphocholine + hexadecanoate + H(+). It catalyses the reaction 1,2,3-tri-(9Z-octadecenoyl)-glycerol + H2O = di-(9Z)-octadecenoylglycerol + (9Z)-octadecenoate + H(+). The catalysed reaction is 1-hexadecanoyl-2-(9Z)-octadecenoyl-3-octadecanoyl-sn-glycerol + H2O = 1-hexadecanoyl-2-(9Z-octadecenoyl)-sn-glycerol + octadecanoate + H(+). The enzyme catalyses 1,3-dihexadecanoyl-2-(9Z-octadecenoyl)glycerol + H2O = 1,3-dihexadecanoylglycerol + (9Z)-octadecenoate + H(+). It carries out the reaction 1,3-dihexadecanoyl-2-(9Z-octadecenoyl)glycerol + H2O = 1-hexadecanoyl-2-(9Z-octadecenoyl)-glycerol + hexadecanoate + H(+). It catalyses the reaction 1-hexadecanoyl-2-(9Z)-octadecenoyl-3-octadecanoyl-sn-glycerol + H2O = 1-hexadecanoyl-3-octadecanoyl-sn-glycerol + (9Z)-octadecenoate + H(+). The catalysed reaction is 1-hexadecanoyl-2-(9Z)-octadecenoyl-3-octadecanoyl-sn-glycerol + H2O = 2-(9Z-octadecenoyl)-3-octadecanoyl-sn-glycerol + hexadecanoate + H(+). The enzyme catalyses 1-octadecanoyl-2-(9Z,12Z)-octadecadienoyl-sn-glycerol + H2O = 1-octadecanoyl-sn-glycerol + (9Z,12Z)-octadecadienoate + H(+). It carries out the reaction 1,2-di-(9Z-octadecenoyl)-sn-glycerol + H2O = 1-(9Z-octadecenoyl)-sn-glycerol + (9Z)-octadecenoate + H(+). It catalyses the reaction 2,3-di-(9Z)-octadecenoyl-sn-glycerol + H2O = 3-(9Z-octadecenoyl)-sn-glycerol + (9Z)-octadecenoate + H(+). The catalysed reaction is 1,3-di-(9Z-octadecenoyl)-glycerol + H2O = 1-(9Z-octadecenoyl)-glycerol + (9Z)-octadecenoate + H(+). The enzyme catalyses 1-(9Z-octadecenoyl)-glycerol + H2O = glycerol + (9Z)-octadecenoate + H(+). It carries out the reaction 2-(9Z-octadecenoyl)-glycerol + H2O = glycerol + (9Z)-octadecenoate + H(+). Calcium-independent membrane-associated phospholipase that catalyzes complete diacylation of phospholipids by hydrolyzing both sn-1 and sn-2 fatty acyl chains attached to the glycerol backbone (phospholipase B activity). Has dual phospholipase and lysophospholipase activities toward diacylphospholipids. Preferentially cleaves sn-2 ester bonds over sn-1 bonds. Acts as a lipase toward glycerolipid substrates. Hydrolyzes fatty acyl chains of diacylglycerols with preference for the sn-2 position and of triacylglycerols with not positional selectivity. May also hydrolyze long chain retinyl esters such as retinyl palmitate. May contribute to digestion of dietary phospholipids, glycerolipids and retinoids, facilitating lipid absorption at the brush border. This is Phospholipase B1, membrane-associated (PLB1) from Homo sapiens (Human).